Reading from the N-terminus, the 855-residue chain is MTDLSQHTPMMQQYWKLKNQHLDQLMFYRMGDFYEIFYEDAKKAAKLLDITLTARGQSAGQSIPMCGIPYHAAEGYLAKLVKLGESVVICEQIGDPATSKGPVDRQVVRIITPGTISDEALLDERRDNLIAAVLGDERLFGLAVLDITSGNFSVLEIKGWENLLAELERINPVELLIPDDWPQGLPAEKRRGARRRAPWDFERDSAHKSLCQQFSTQDLKGFGCETLTLAIGAAGCLLGYAKETQRTALPHLRSLRHERLDDTVILDAASRRNLELDTNLSGGRDNTLQSVMDRCQTAMGTRLLTRWLNRPLRDLSILQARQTSITCFLERYRFENLQPQLKEIGDIERILARIGLRNARPRDLARLRDALSALPELQQAMTDLDAPHLQQLAQTASTYPELADLLQRAINDNPPAVIRDGGVLKTGYDAELDELQSLSENAGQFLIDLEAREKARTGLSHLKVGYNRVHGYFIELPSKQAEQAPADYIRRQTLKGAERFITPELKEFEDKALSAKSRALAREKMLYETLLEDLIGHLAPLQDTAAALAELDVLSNLAERALNLDLNCPRFVAEPCMRIEQGRHPVVEQVLSTPFVANDLALDDSTRMLIITGPNMGGKSTYMRQTALIVLLAHIGSFVPAASCELSLVDRIFTRIGSSDDLAGGRSTFMVEMSETANILHNATDKSLVLMDEVGRGTSTFDGLSLAWAAAECLAQLRAYTLFATHYFELTVLPESEPLVNNVHLNATEHNERIVFLHRVLPGPASQSYGLAVAQLAGVPGKVITRAKEHLQRLETTSLPHEQPRAKPGKPAIPQQSDMFASLPHPVLDELSKIKVDDMTPRQALDLLYTLQTRL.

Residue 613-620 (GPNMGGKS) participates in ATP binding. Residues 796-817 (TTSLPHEQPRAKPGKPAIPQQS) form a disordered region.

This sequence belongs to the DNA mismatch repair MutS family.

In terms of biological role, this protein is involved in the repair of mismatches in DNA. It is possible that it carries out the mismatch recognition step. This protein has a weak ATPase activity. The polypeptide is DNA mismatch repair protein MutS (Pseudomonas syringae pv. tomato (strain ATCC BAA-871 / DC3000)).